A 376-amino-acid chain; its full sequence is Queuine tRNA-ribosyltransferase (376 aa).

D93 acts as the Proton acceptor in catalysis. Substrate is bound by residues 93 to 97 (DSGGF), D147, Q190, and G217. The RNA binding stretch occupies residues 248–254 (GVGTPDD). The active-site Nucleophile is the D267. The RNA binding; important for wobble base 34 recognition stretch occupies residues 272–276 (TRSGR).

This sequence belongs to the queuine tRNA-ribosyltransferase family. As to quaternary structure, homodimer. Within each dimer, one monomer is responsible for RNA recognition and catalysis, while the other monomer binds to the replacement base PreQ1.

It carries out the reaction 7-aminomethyl-7-carbaguanine + guanosine(34) in tRNA = 7-aminomethyl-7-carbaguanosine(34) in tRNA + guanine. The protein operates within tRNA modification; tRNA-queuosine biosynthesis. Functionally, catalyzes the base-exchange of a guanine (G) residue with the queuine precursor 7-aminomethyl-7-deazaguanine (PreQ1) at position 34 (anticodon wobble position) in tRNAs with GU(N) anticodons (tRNA-Asp, -Asn, -His and -Tyr). Catalysis occurs through a double-displacement mechanism. The nucleophile active site attacks the C1' of nucleotide 34 to detach the guanine base from the RNA, forming a covalent enzyme-RNA intermediate. The proton acceptor active site deprotonates the incoming PreQ1, allowing a nucleophilic attack on the C1' of the ribose to form the product. After dissociation, two additional enzymatic reactions on the tRNA convert PreQ1 to queuine (Q), resulting in the hypermodified nucleoside queuosine (7-(((4,5-cis-dihydroxy-2-cyclopenten-1-yl)amino)methyl)-7-deazaguanosine). The chain is Queuine tRNA-ribosyltransferase from Rhizobium meliloti (strain 1021) (Ensifer meliloti).